We begin with the raw amino-acid sequence, 520 residues long: Laccase (520 aa).

The first 21 residues, M1–A21, serve as a signal peptide directing secretion. Plastocyanin-like domains are found at residues I23 to Y148 and V160 to Y302. N-linked (GlcNAc...) asparagine glycosylation is found at N72 and N75. Cu cation is bound by residues H85, H87, H130, and H132. Disulfide bonds link C106-C509 and C138-C226. N-linked (GlcNAc...) asparagine glycans are attached at residues N210, N229, and N354. A Plastocyanin-like 3 domain is found at T369–D491. 7 residues coordinate Cu cation: H416, H419, H421, H473, C474, H475, and H479.

The protein belongs to the multicopper oxidase family. Cu cation serves as cofactor.

The protein localises to the secreted. It catalyses the reaction 4 hydroquinone + O2 = 4 benzosemiquinone + 2 H2O. Its function is as follows. Lignin degradation and detoxification of lignin-derived products. Has activity towards guaiacol. This Trametes hirsuta (White-rot fungus) protein is Laccase.